The sequence spans 326 residues: Putative ABC transporter ATP-binding protein MA_4020 (326 aa).

The span at 1–12 shows a compositional bias: polar residues; sequence MTISTLSSSYGN. The disordered stretch occupies residues 1–34; that stretch reads MTISTLSSSYGNAQDVPAEDSDRHGSIEPGSEKA. The region spanning 46 to 281 is the ABC transporter domain; that stretch reads LEVKNLCHRY…PELLRKAHLR (236 aa). 80-87 provides a ligand contact to ATP; the sequence is GANGAGKS.

The protein belongs to the ABC transporter superfamily.

Its subcellular location is the cell membrane. Its function is as follows. Probably part of an ABC transporter complex. Responsible for energy coupling to the transport system. The chain is Putative ABC transporter ATP-binding protein MA_4020 from Methanosarcina acetivorans (strain ATCC 35395 / DSM 2834 / JCM 12185 / C2A).